A 258-amino-acid chain; its full sequence is Imidazole glycerol phosphate synthase subunit HisF (258 aa).

Residues D11 and D130 contribute to the active site.

It belongs to the HisA/HisF family. In terms of assembly, heterodimer of HisH and HisF.

Its subcellular location is the cytoplasm. It catalyses the reaction 5-[(5-phospho-1-deoxy-D-ribulos-1-ylimino)methylamino]-1-(5-phospho-beta-D-ribosyl)imidazole-4-carboxamide + L-glutamine = D-erythro-1-(imidazol-4-yl)glycerol 3-phosphate + 5-amino-1-(5-phospho-beta-D-ribosyl)imidazole-4-carboxamide + L-glutamate + H(+). It participates in amino-acid biosynthesis; L-histidine biosynthesis; L-histidine from 5-phospho-alpha-D-ribose 1-diphosphate: step 5/9. Its function is as follows. IGPS catalyzes the conversion of PRFAR and glutamine to IGP, AICAR and glutamate. The HisF subunit catalyzes the cyclization activity that produces IGP and AICAR from PRFAR using the ammonia provided by the HisH subunit. The sequence is that of Imidazole glycerol phosphate synthase subunit HisF from Serratia proteamaculans (strain 568).